Consider the following 565-residue polypeptide: 4-coumarate--CoA ligase-like 2 (565 aa).

Residues S221, S222, G223, T224, T225, and K229 each contribute to the ATP site. F265 serves as a coordination point for (E)-4-coumaroyl-AMP. Residue K286 coordinates CoA. Positions D288–Q359 are SBD1. Residues G337, Q359, G360, and T364 each coordinate (E)-4-coumaroyl-AMP. The ATP site is built by Q359, G360, T364, D445, and R460. The segment at G360–Y424 is SBD2. (E)-4-coumaroyl-AMP is bound by residues K462 and K466. Position 469 (G469) interacts with CoA. K551 lines the ATP pocket. Residues S563 to L565 carry the Microbody targeting signal motif.

This sequence belongs to the ATP-dependent AMP-binding enzyme family. Mg(2+) is required as a cofactor.

Its subcellular location is the peroxisome. It carries out the reaction (E)-4-coumarate + ATP + CoA = (E)-4-coumaroyl-CoA + AMP + diphosphate. The enzyme catalyses (E)-4-coumarate + ATP + H(+) = (E)-4-coumaroyl-AMP + diphosphate. It catalyses the reaction (E)-4-coumaroyl-AMP + CoA = (E)-4-coumaroyl-CoA + AMP + H(+). Carboxylate--CoA ligase that may use 4-coumarate as substrate. Follows a two-step reaction mechanism, wherein the carboxylate substrate first undergoes adenylation by ATP, followed by a thioesterification in the presence of CoA to yield the final CoA thioester. This is 4-coumarate--CoA ligase-like 2 from Arabidopsis thaliana (Mouse-ear cress).